A 106-amino-acid chain; its full sequence is Large ribosomal subunit protein eL42Q (106 aa).

This sequence belongs to the eukaryotic ribosomal protein eL42 family.

The sequence is that of Large ribosomal subunit protein eL42Q (RIM-C) from Candida maltosa (Yeast).